We begin with the raw amino-acid sequence, 507 residues long: Probable malate:quinone oxidoreductase 2 (507 aa).

Belongs to the MQO family. FAD serves as cofactor.

The enzyme catalyses (S)-malate + a quinone = a quinol + oxaloacetate. It participates in carbohydrate metabolism; tricarboxylic acid cycle; oxaloacetate from (S)-malate (quinone route): step 1/1. This Pseudomonas aeruginosa (strain ATCC 15692 / DSM 22644 / CIP 104116 / JCM 14847 / LMG 12228 / 1C / PRS 101 / PAO1) protein is Probable malate:quinone oxidoreductase 2.